Reading from the N-terminus, the 325-residue chain is Glutarate 2-hydroxylase (325 aa).

Fe cation contacts are provided by His-160, Asp-162, and His-292.

It belongs to the glutarate hydroxylase family. In terms of assembly, homotetramer. Fe(2+) serves as cofactor.

It carries out the reaction glutarate + 2-oxoglutarate + O2 = (S)-2-hydroxyglutarate + succinate + CO2. Its pathway is amino-acid degradation. Its function is as follows. Acts as an alpha-ketoglutarate-dependent dioxygenase catalyzing hydroxylation of glutarate (GA) to L-2-hydroxyglutarate (L2HG). Functions in a L-lysine degradation pathway that proceeds via cadaverine, glutarate and L-2-hydroxyglutarate. The polypeptide is Glutarate 2-hydroxylase (Escherichia coli O7:K1 (strain IAI39 / ExPEC)).